The sequence spans 156 residues: Small ribosomal subunit protein uS7 (156 aa).

The protein belongs to the universal ribosomal protein uS7 family. In terms of assembly, part of the 30S ribosomal subunit. Contacts proteins S9 and S11.

One of the primary rRNA binding proteins, it binds directly to 16S rRNA where it nucleates assembly of the head domain of the 30S subunit. Is located at the subunit interface close to the decoding center, probably blocks exit of the E-site tRNA. This Phytoplasma australiense protein is Small ribosomal subunit protein uS7.